The following is a 188-amino-acid chain: Elongation factor P (188 aa).

The protein belongs to the elongation factor P family.

Its subcellular location is the cytoplasm. It participates in protein biosynthesis; polypeptide chain elongation. In terms of biological role, involved in peptide bond synthesis. Stimulates efficient translation and peptide-bond synthesis on native or reconstituted 70S ribosomes in vitro. Probably functions indirectly by altering the affinity of the ribosome for aminoacyl-tRNA, thus increasing their reactivity as acceptors for peptidyl transferase. This is Elongation factor P from Pelodictyon phaeoclathratiforme (strain DSM 5477 / BU-1).